A 691-amino-acid polypeptide reads, in one-letter code: Dipeptidyl-peptidase 5 (691 aa).

Positions 1–20 (MKRTILSLLAAVSLAIPVYA) are cleaved as a signal peptide. Active-site charge relay system residues include Ser-549, Asp-634, and His-666.

This sequence belongs to the peptidase S9C family. In terms of assembly, homodimer.

It localises to the periplasm. Functionally, catalyzes the removal of dipeptides from the N-terminus of oligopeptides. Prefers Ala and hydrophobic residues at the P1 position, and has no preference for P2 residues. Shows the highest dipeptidyl peptidase activity toward the synthetic substrate Lys-Ala-methylcoumaryl-7-amide (Lys-Ala-MCA). Is likely involved in amino acid metabolism and bacterial growth/survival of asaccharolytic P.endodontalis, that utilizes amino acids from extracellular proteinaceous nutrients as energy and carbon sources. The chain is Dipeptidyl-peptidase 5 from Porphyromonas endodontalis (strain ATCC 35406 / DSM 24491 / JCM 8526 / CCUG 16442 / BCRC 14492 / NCTC 13058 / HG 370) (Bacteroides endodontalis).